A 387-amino-acid chain; its full sequence is Phosphoglycerate kinase (387 aa).

Substrate contacts are provided by residues Asp-21–Asn-23, Arg-36, His-59–Arg-62, Arg-113, and Arg-146. Residues Lys-197, Glu-314, and Gly-340 to Thr-343 each bind ATP.

It belongs to the phosphoglycerate kinase family. In terms of assembly, monomer.

Its subcellular location is the cytoplasm. It carries out the reaction (2R)-3-phosphoglycerate + ATP = (2R)-3-phospho-glyceroyl phosphate + ADP. Its pathway is carbohydrate degradation; glycolysis; pyruvate from D-glyceraldehyde 3-phosphate: step 2/5. The protein is Phosphoglycerate kinase of Sodalis glossinidius (strain morsitans).